Consider the following 125-residue polypeptide: Large ribosomal subunit protein uL22c (125 aa).

The protein belongs to the universal ribosomal protein uL22 family. As to quaternary structure, part of the 50S ribosomal subunit.

The protein localises to the plastid. It is found in the chloroplast. In terms of biological role, this protein binds specifically to 23S rRNA. The globular domain of the protein is located near the polypeptide exit tunnel on the outside of the subunit, while an extended beta-hairpin is found that lines the wall of the exit tunnel in the center of the 70S ribosome. This Huperzia lucidula (Shining clubmoss) protein is Large ribosomal subunit protein uL22c (rpl22).